Reading from the N-terminus, the 654-residue chain is DNA ligase (654 aa).

NAD(+)-binding positions include 37–41 (DEEYD), 86–87 (SM), and E113. K115 (N6-AMP-lysine intermediate) is an active-site residue. NAD(+) is bound by residues R136, E170, and K308. Zn(2+) is bound by residues C402, C405, C418, and C423. In terms of domain architecture, BRCT spans 576–654 (ITQNAFSGKS…GEFERLKLEI (79 aa)).

The protein belongs to the NAD-dependent DNA ligase family. LigA subfamily. Requires Mg(2+) as cofactor. It depends on Mn(2+) as a cofactor.

The enzyme catalyses NAD(+) + (deoxyribonucleotide)n-3'-hydroxyl + 5'-phospho-(deoxyribonucleotide)m = (deoxyribonucleotide)n+m + AMP + beta-nicotinamide D-nucleotide.. Its function is as follows. DNA ligase that catalyzes the formation of phosphodiester linkages between 5'-phosphoryl and 3'-hydroxyl groups in double-stranded DNA using NAD as a coenzyme and as the energy source for the reaction. It is essential for DNA replication and repair of damaged DNA. This Campylobacter curvus (strain 525.92) protein is DNA ligase.